A 337-amino-acid polypeptide reads, in one-letter code: Cytochrome P450 monooxygenase dpmpJ (337 aa).

A helical membrane pass occupies residues 4–24; it reads LILHHPYASLAAGILLYFFCL. N158 carries an N-linked (GlcNAc...) asparagine glycan.

It belongs to the cytochrome P450 family. The cofactor is heme.

The protein localises to the membrane. Its pathway is secondary metabolite biosynthesis; terpenoid biosynthesis. Functionally, cytochrome P450 monooxygenase; part of the gene cluster that mediates the biosynthesis of diterpenoid pyrones. The first step of the pathway is the synthesis of the alpha-pyrone moiety by the polyketide synthase dpmpA via condensation of one acetyl-CoA starter unit with 3 malonyl-CoA units and 2 methylations. The alpha-pyrone is then combined with geranylgeranyl pyrophosphate (GGPP) formed by the GGPP synthase dpmpD through the action of the prenyltransferase dpmpC to yield a linear alpha-pyrone diterpenoid. Subsequent steps in the diterpenoid pyrone biosynthetic pathway involve the decalin core formation, which is initiated by the epoxidation of the C10-C11 olefin by the FAD-dependent oxidoreductase dpmpE, and is followed by a cyclization cascade catalyzed by the terpene cyclase dpmpB. The short chain dehydrogenase/reductase dpmpG then oxidizes the 8S hydroxy group to a ketone and the short chain dehydrogenase/reductase dpmpH reduces the ketone to the 8R hydroxy group to yield higginsianin B. Higginsianin B is further methylated by the methyltransferase dpmpI to produce the intermediate named FDDP B. The cytochrome P450 monooxygenase dpmpJ then oxidizes the C-26 methyl to primary alcohol, producing the final diterpenoid pyrone with a C-26 primary alcohol on the gamma-pyrone moiety named FDDP C. The protein is Cytochrome P450 monooxygenase dpmpJ of Macrophomina phaseolina (strain MS6) (Charcoal rot fungus).